Reading from the N-terminus, the 82-residue chain is Small ribosomal subunit protein bS16 (82 aa).

The protein belongs to the bacterial ribosomal protein bS16 family.

The protein is Small ribosomal subunit protein bS16 of Proteus mirabilis (strain HI4320).